The following is a 439-amino-acid chain: tRNA-2-methylthio-N(6)-dimethylallyladenosine synthase (439 aa).

The MTTase N-terminal domain occupies 2 to 119 (KKLYLKTHGC…LPDLLDSVIQ (118 aa)). The [4Fe-4S] cluster site is built by C11, C48, C82, C156, C160, and C163. One can recognise a Radical SAM core domain in the interval 142-374 (RAEGPSAFVS…QNRINAKAAE (233 aa)). In terms of domain architecture, TRAM spans 377–439 (QSMVGTQQRI…RPYSLWGEIC (63 aa)).

Belongs to the methylthiotransferase family. MiaB subfamily. Monomer. [4Fe-4S] cluster is required as a cofactor.

Its subcellular location is the cytoplasm. It carries out the reaction N(6)-dimethylallyladenosine(37) in tRNA + (sulfur carrier)-SH + AH2 + 2 S-adenosyl-L-methionine = 2-methylsulfanyl-N(6)-dimethylallyladenosine(37) in tRNA + (sulfur carrier)-H + 5'-deoxyadenosine + L-methionine + A + S-adenosyl-L-homocysteine + 2 H(+). Its function is as follows. Catalyzes the methylthiolation of N6-(dimethylallyl)adenosine (i(6)A), leading to the formation of 2-methylthio-N6-(dimethylallyl)adenosine (ms(2)i(6)A) at position 37 in tRNAs that read codons beginning with uridine. The chain is tRNA-2-methylthio-N(6)-dimethylallyladenosine synthase from Coxiella burnetii (strain CbuK_Q154) (Coxiella burnetii (strain Q154)).